Reading from the N-terminus, the 1872-residue chain is Plexin-A3 (1872 aa).

Residues 1–19 (MHTVCLLPLLFFTIGGCLG) form the signal peptide. The Sema domain occupies 20–489 (SSRPFRTFVV…SEKQVSQLPV (470 aa)). Over 20 to 1220 (SSRPFRTFVV…ITADRALTLP (1201 aa)) the chain is Extracellular. Asn60 is a glycosylation site (N-linked (GlcNAc...) asparagine). Cystine bridges form between Cys78/Cys87, Cys113/Cys121, Cys267/Cys388, Cys283/Cys339, Cys357/Cys376, Cys492/Cys509, Cys498/Cys540, Cys501/Cys518, and Cys512/Cys524. An N-linked (GlcNAc...) asparagine glycan is attached at Asn549. Cys575 and Cys595 form a disulfide bridge. IPT/TIG domains are found at residues 841 to 934 (PRIT…YSFV), 936 to 1021 (PTLD…YTYT), 1024 to 1123 (PTVT…FTYY), and 1126 to 1212 (PSFE…LHIT). Asn1163 carries an N-linked (GlcNAc...) asparagine glycan. The chain crosses the membrane as a helical span at residues 1221–1241 (AMVGLAAGGGLLLLAITVVLV). Residues 1240 to 1294 (LVAYKRKTQDADRTLKRLQLQMDNLESRVALECKEAFAELQTDINELTNHMDGVQ) adopt a coiled-coil conformation. Over 1242 to 1872 (AYKRKTQDAD…QIITLVSSSS (631 aa)) the chain is Cytoplasmic. Phosphoserine is present on Ser1597.

Belongs to the plexin family.

It localises to the cell membrane. In terms of biological role, coreceptor for SEMA3A and SEMA3F. Necessary for signaling by class 3 semaphorins and subsequent remodeling of the cytoskeleton. Plays a role in axon guidance in the developing nervous system. Regulates the migration of sympathetic neurons, but not of neural crest precursors. Required for normal dendrite spine morphology in pyramidal neurons. May play a role in regulating semaphorin-mediated programmed cell death in the developing nervous system. Class 3 semaphorins bind to a complex composed of a neuropilin and a plexin. The plexin modulates the affinity of the complex for specific semaphorins, and its cytoplasmic domain is required for the activation of down-stream signaling events in the cytoplasm. This is Plexin-A3 (Plxna3) from Rattus norvegicus (Rat).